The sequence spans 671 residues: DNA ligase (671 aa).

Residues 32–36 (DVEYD), 81–82 (SL), and E113 contribute to the NAD(+) site. K115 serves as the catalytic N6-AMP-lysine intermediate. Positions 136, 173, 290, and 314 each coordinate NAD(+). Residues C408, C411, C426, and C432 each contribute to the Zn(2+) site. In terms of domain architecture, BRCT spans 593-671 (EIDSPFAGKT…EAEMLRLLGS (79 aa)).

This sequence belongs to the NAD-dependent DNA ligase family. LigA subfamily. It depends on Mg(2+) as a cofactor. The cofactor is Mn(2+).

It carries out the reaction NAD(+) + (deoxyribonucleotide)n-3'-hydroxyl + 5'-phospho-(deoxyribonucleotide)m = (deoxyribonucleotide)n+m + AMP + beta-nicotinamide D-nucleotide.. Functionally, DNA ligase that catalyzes the formation of phosphodiester linkages between 5'-phosphoryl and 3'-hydroxyl groups in double-stranded DNA using NAD as a coenzyme and as the energy source for the reaction. It is essential for DNA replication and repair of damaged DNA. This Escherichia coli O17:K52:H18 (strain UMN026 / ExPEC) protein is DNA ligase.